Consider the following 359-residue polypeptide: N6-succino-2-amino-2'-deoxyadenylate synthase (359 aa).

S23 (proton acceptor) is an active-site residue. 5 residues coordinate ATP: S23, T24, G25, K26, and G27. S23 is a dGMP binding site. S23 is a Mg(2+) binding site. N49 is a dGMP binding site. ATP is bound by residues G51, H52, and T53. G51 serves as a coordination point for Mg(2+). Residues S131, T132, and R146 each contribute to the dGMP site. Q190 contacts ATP. T205 is a dGMP binding site. T274 is a binding site for Mg(2+). Residues T274, V275, and R280 each contribute to the L-aspartate site. Positions 305 and 308 each coordinate ATP.

This sequence belongs to the Caudovirales PurZ family. Mg(2+) serves as cofactor.

The enzyme catalyses dGMP + L-aspartate + ATP = (2S)-2-amino-2'-deoxyadenylo-succinate + ADP + phosphate + 2 H(+). The protein operates within purine metabolism. Involved in the synthesis of the atypical nucleotide dZTP (2-amino-2'-deoxyadenosine-5'-triphosphate). Catalyzes the condensation of aspartate with deoxyguanylate into dSMP (N6-succino-2-amino-2'-deoxyadenylate), which undergoes defumarylation and phosphorylation respectively by host PurB and guanylate/nucleoside diphosphate kinases to give dZTP. dZTP is integrated into the viral genome instead of adenine by the viral DNA polymerase. This Z-base probably completely replaces adenosine and forms a triple bond to the opposite T-base. The resulting non-standard viral DNA is called Z-genome. The chemically modified DNA is probably harder for the host bacteria to digest with nucleases or restriction enzymes. This Cyanophage S-2L (Cyanobacteria phage S-2L) protein is N6-succino-2-amino-2'-deoxyadenylate synthase.